Reading from the N-terminus, the 206-residue chain is UPF0328 protein ECU01_0050/ECU01_1560 (206 aa).

2 disordered regions span residues methionine 1–threonine 153 and glycine 179–leucine 206. Residues histidine 74–serine 96 are compositionally biased toward basic and acidic residues. Composition is skewed to polar residues over residues proline 97–threonine 120 and serine 132–histidine 148.

This sequence belongs to the UPF0328 family.

The sequence is that of UPF0328 protein ECU01_0050/ECU01_1560 from Encephalitozoon cuniculi (strain GB-M1) (Microsporidian parasite).